Consider the following 133-residue polypeptide: Ribosome-binding factor A (133 aa).

It belongs to the RbfA family. Monomer. Binds 30S ribosomal subunits, but not 50S ribosomal subunits or 70S ribosomes.

It is found in the cytoplasm. One of several proteins that assist in the late maturation steps of the functional core of the 30S ribosomal subunit. Associates with free 30S ribosomal subunits (but not with 30S subunits that are part of 70S ribosomes or polysomes). Required for efficient processing of 16S rRNA. May interact with the 5'-terminal helix region of 16S rRNA. The protein is Ribosome-binding factor A of Escherichia coli O127:H6 (strain E2348/69 / EPEC).